Consider the following 346-residue polypeptide: UDP-3-O-acylglucosamine N-acyltransferase (346 aa).

His-253 acts as the Proton acceptor in catalysis.

The protein belongs to the transferase hexapeptide repeat family. LpxD subfamily. As to quaternary structure, homotrimer.

It carries out the reaction a UDP-3-O-[(3R)-3-hydroxyacyl]-alpha-D-glucosamine + a (3R)-hydroxyacyl-[ACP] = a UDP-2-N,3-O-bis[(3R)-3-hydroxyacyl]-alpha-D-glucosamine + holo-[ACP] + H(+). The protein operates within bacterial outer membrane biogenesis; LPS lipid A biosynthesis. In terms of biological role, catalyzes the N-acylation of UDP-3-O-acylglucosamine using 3-hydroxyacyl-ACP as the acyl donor. Is involved in the biosynthesis of lipid A, a phosphorylated glycolipid that anchors the lipopolysaccharide to the outer membrane of the cell. This Rickettsia peacockii (strain Rustic) protein is UDP-3-O-acylglucosamine N-acyltransferase.